The sequence spans 116 residues: NADH-ubiquinone oxidoreductase chain 3 (116 aa).

Helical transmembrane passes span 3-23, 56-76, and 88-108; these read LFATILIIMTTLSLVLALVSF, FFLVAVLFPLFDLEIALLLPL, and TLFWAMTVLILLTLGLAYEWA.

This sequence belongs to the complex I subunit 3 family. Core subunit of respiratory chain NADH dehydrogenase (Complex I) which is composed of 45 different subunits.

The protein localises to the mitochondrion inner membrane. It catalyses the reaction a ubiquinone + NADH + 5 H(+)(in) = a ubiquinol + NAD(+) + 4 H(+)(out). Core subunit of the mitochondrial membrane respiratory chain NADH dehydrogenase (Complex I) which catalyzes electron transfer from NADH through the respiratory chain, using ubiquinone as an electron acceptor. Essential for the catalytic activity of complex I. The chain is NADH-ubiquinone oxidoreductase chain 3 (mt-nd3) from Danio rerio (Zebrafish).